The chain runs to 210 residues: Fibroblast growth factor 8 (210 aa).

Positions 1-27 (MRLIPSRLSYLFLHLFAFCYYAQVTIQ) are cleaved as a signal peptide.

The protein belongs to the heparin-binding growth factors family. As to quaternary structure, monomer. Homodimer.

The protein localises to the secreted. Its function is as follows. Plays an important role in the regulation of embryonic development, cell proliferation, cell differentiation and cell migration. Required for Kupffer's vesicle ciliogenesis. This Danio rerio (Zebrafish) protein is Fibroblast growth factor 8.